The following is a 594-amino-acid chain: Cytoplasmic polyadenylation element-binding protein 1 (594 aa).

The disordered stretch occupies residues 1-33; that stretch reads MQHQVKACGDSKSTTRSLQGNRRSGAASLKKPS. The segment covering 11-22 has biased composition (polar residues); that stretch reads SKSTTRSLQGNR. RRM domains lie at 257–364 and 381–452; these read RKVF…PWRL and RTVF…HAET. Residues 519–560 form a disordered region; that stretch reads TGDQTRILPRPPHHQSSHYSPRSHQMMNHDSMESSNQSRGNT. Polar residues predominate over residues 535–560; the sequence is SHYSPRSHQMMNHDSMESSNQSRGNT.

Interacts with fbf-1.

Cytoplasmic polyadenylation element binding protein that binds to and regulates the translation of specific mRNAs. Essential for progression through meiosis. Involved in spermatogenesis. The chain is Cytoplasmic polyadenylation element-binding protein 1 (cpb-1) from Caenorhabditis remanei (Caenorhabditis vulgaris).